Reading from the N-terminus, the 214-residue chain is MRKQQIPTLSTSALDKSPGPGSPDSDIEMKSTSVKSDIDELAKLLKDKTKDGIAIFNSALKVCIENNPNALLHEAAEHGKKKLVVEILKVNRDSINSTTPQGLSVLHSAVAGVNNKKEIIEILLNEEPILVTKKDALGLTPSCYNTSTEILKILQEYERNVIDQALIKPAKYVPITPPKCLPIEVVQSNLEKAFEEYMGYKLVGQTNPTNSDEF.

A compositionally biased stretch (polar residues) spans 1 to 14 (MRKQQIPTLSTSAL). The interval 1–32 (MRKQQIPTLSTSALDKSPGPGSPDSDIEMKST) is disordered. One copy of the ANK repeat lies at 67–135 (NPNALLHEAA…EEPILVTKKD (69 aa)).

In Rickettsia felis (strain ATCC VR-1525 / URRWXCal2) (Rickettsia azadi), this protein is Putative ankyrin repeat protein RF_1081.